The following is a 601-amino-acid chain: Zinc finger protein 37 (601 aa).

Positions 1 to 70 (MATPEPAESD…VRANKNSSSS (70 aa)) constitute a KRAB domain. Phosphothreonine is present on Thr3. Ser9 carries the post-translational modification Phosphoserine. Positions 30–43 (ETCSNPASMGNQDP) are enriched in polar residues. Residues 30–254 (ETCSNPASMG…SKSDKAPGSG (225 aa)) form a disordered region. Residues 60 to 70 (SVRANKNSSSS) are compositionally biased toward low complexity. Positions 77 to 88 (TGTSAKVQQDGA) are enriched in polar residues. Basic and acidic residues-rich tracts occupy residues 115 to 136 (KSSECTLLEKKNVHSKHDPSEK), 164 to 174 (KKPDTANEYRK), and 183 to 238 (VNRD…EKRK). The C2H2-type 1 zinc-finger motif lies at 257–279 (YECNQCGKVLSHKQGLLDHQRTH). Residues 285 to 303 (YECYECGIAFSQKSHLVVH) form a C2H2-type 2; atypical zinc finger. 10 C2H2-type zinc fingers span residues 314 to 337 (YECVQCGKAHGHKHALTDHLRISH), 343 to 365 (YKCNECGKTFRHSSNLMQHIRSH), 371 to 393 (YECKECGKSFRYNSSFTEHVRTH), 399 to 421 (YECNECGKAFKYGSSLTKHMRIH), 427 to 449 (FECTECGKTFSKKSHLVIHQRTH), 455 to 477 (YKCKECGKAFGHSSSLTYHMRTH), 483 to 505 (FECNKCGKAFKQIEGLTQHQRVH), 511 to 533 (YECVECGKAFSQKSHLIVHQRTH), 539 to 561 (FECYECGKAFNAKSQLVIHQRSH), and 570 to 592 (YECVECGKAFKQNASLTRHMKTH).

It belongs to the krueppel C2H2-type zinc-finger protein family. Expressed in testes, brain, kidney, spleen, thymus, lung, and at low levels in liver.

Its subcellular location is the nucleus. Functionally, may be involved in transcriptional regulation. In Rattus norvegicus (Rat), this protein is Zinc finger protein 37 (Zfp37).